The chain runs to 290 residues: Hsp70 nucleotide exchange factor FES1 (290 aa).

Position 12 is a phosphoserine (S12). ARM repeat units follow at residues 13–57 (QGDK…NPEV), 76–116 (LDNA…TAVQ), 120–161 (DSQN…NLIR), 164–205 (KDIS…AYLS), 211–251 (ENII…HLIS), and 253–290 (GIKFNEQELHKLNEGYKHIEPLKDRLNEDDYLAVKYVL).

It belongs to the FES1 family. As to quaternary structure, interacts with the Hsp70 chaperones SSA1 and SSB1.

It localises to the cytoplasm. Functionally, involved in protein translation, propagation of [PSI+] prions, and polyamine tolerance. Functions as a nucleotide exchange factor (NEF), which accelerates the release of ADP, for the cytosolic Hsp70 chaperone SSA1 and the ribosome-associated Hsp70 chaperone SSB1. Required for fully efficient Hsp70-mediated folding of proteins. The chain is Hsp70 nucleotide exchange factor FES1 (FES1) from Saccharomyces cerevisiae (strain ATCC 204508 / S288c) (Baker's yeast).